The following is a 576-amino-acid chain: Deformed epidermal autoregulatory factor 1 (576 aa).

3 disordered regions span residues 52 to 76 (VTSS…GGGN), 189 to 215 (AGGA…NPST), and 309 to 362 (ESAS…SGSG). Composition is skewed to gly residues over residues 61–76 (GSGG…GGGN) and 191–207 (GASG…GGSS). Residues 210–291 (SENPSTQHNE…QSLIDEGTLT (82 aa)) enclose the SAND domain. The Nuclear localization signal motif lies at 324–340 (RKRNQTDLDMESGPKRK). A compositionally biased stretch (low complexity) spans 345–362 (HSNNNNSNTNNNNTSGSG). 8 residues coordinate Zn(2+): Cys521, Cys524, Cys532, Cys535, Cys541, Cys545, His553, and Cys557. The MYND-type zinc-finger motif lies at 521 to 557 (CANCNREALAECSLCRKTPYCSEFCQRKDWNAHQVEC).

It is found in the nucleus. Transcription factor that binds the homeotic Deformed (Dfd) response element. High affinity binding sites contain at least 1 TTCG motif surrounded by additional TCG sequences. May be involved in the selective action of Dfd on these sites without binding directly to the Dfd protein. Requirement of DEAF1 activity may be a common feature of enhancers targeted by Dfd. This is Deformed epidermal autoregulatory factor 1 (Deaf1) from Drosophila melanogaster (Fruit fly).